The chain runs to 121 residues: Ribosome-binding factor A (121 aa).

It belongs to the RbfA family. As to quaternary structure, monomer. Binds 30S ribosomal subunits, but not 50S ribosomal subunits or 70S ribosomes.

It is found in the cytoplasm. Its function is as follows. One of several proteins that assist in the late maturation steps of the functional core of the 30S ribosomal subunit. Associates with free 30S ribosomal subunits (but not with 30S subunits that are part of 70S ribosomes or polysomes). Required for efficient processing of 16S rRNA. May interact with the 5'-terminal helix region of 16S rRNA. The protein is Ribosome-binding factor A of Paraburkholderia xenovorans (strain LB400).